A 496-amino-acid polypeptide reads, in one-letter code: Pyrrole-2-carboxylic acid decarboxylase (496 aa).

W166 lines the K(+) pocket. Residues V168, R170, Q187, and H188 each coordinate prenylated FMN. A Mn(2+)-binding site is contributed by H188. 4 residues coordinate K(+): A218, A219, M221, and E229. A prenylated FMN-binding site is contributed by E229. Residue E229 participates in Mn(2+) binding. The active-site Proton donor is E278. H386 is a prenylated FMN binding site.

This sequence belongs to the UbiD family. UbiD-like/FDC subfamily. In terms of assembly, homodimer. Prenylated FMN is required as a cofactor. The cofactor is Mn(2+). Requires K(+) as cofactor.

The catalysed reaction is pyrrole-2-carboxylate + H(+) = 1H-pyrrole + CO2. It carries out the reaction pyrrole-2-carboxylate + H2O = 1H-pyrrole + hydrogencarbonate. Its activity is regulated as follows. Imidazole acts as a reversible inhibitor via the formation of an imidazole-prenyl-FMN adduct. Activity is light sensitive. Catalyzes the prenyl-FMN-dependent decarboxylation of pyrrole-2-carboxylate (P2C). Can also catalyze the carboxylation of pyrrole in the presence of elevated concentrations of CO(2) or bicarbonate. Can accept a modest range of heteroaromatic compounds such as 3-methylpyrrole-2-carboxylate, indole-3-carboxylate and furan-2-carboxylate, and shows very low activity with thiophene-2-carboxylate. Attenuates the virulence of P.aeruginosa in a Drosophila model when overexpressed. The polypeptide is Pyrrole-2-carboxylic acid decarboxylase (Pseudomonas aeruginosa (strain ATCC 15692 / DSM 22644 / CIP 104116 / JCM 14847 / LMG 12228 / 1C / PRS 101 / PAO1)).